A 198-amino-acid chain; its full sequence is Nucleoid occlusion factor SlmA (198 aa).

Residues 10–70 (NRREEILQSL…SLIEFIEDSL (61 aa)) enclose the HTH tetR-type domain. The segment at residues 33–52 (TTAKLAASVGVSEAALYRHF) is a DNA-binding region (H-T-H motif). The stretch at 117 to 145 (EQDRLQGRINQLFERIEAQLRQVMREKKM) forms a coiled coil.

Belongs to the nucleoid occlusion factor SlmA family. Homodimer. Interacts with FtsZ.

The protein resides in the cytoplasm. The protein localises to the nucleoid. In terms of biological role, required for nucleoid occlusion (NO) phenomenon, which prevents Z-ring formation and cell division over the nucleoid. Acts as a DNA-associated cell division inhibitor that binds simultaneously chromosomal DNA and FtsZ, and disrupts the assembly of FtsZ polymers. SlmA-DNA-binding sequences (SBS) are dispersed on non-Ter regions of the chromosome, preventing FtsZ polymerization at these regions. The sequence is that of Nucleoid occlusion factor SlmA from Klebsiella pneumoniae subsp. pneumoniae (strain ATCC 700721 / MGH 78578).